Consider the following 550-residue polypeptide: Glucose-6-phosphate isomerase (550 aa).

Glutamate 356 (proton donor) is an active-site residue. Catalysis depends on residues histidine 387 and lysine 515.

This sequence belongs to the GPI family.

Its subcellular location is the cytoplasm. It catalyses the reaction alpha-D-glucose 6-phosphate = beta-D-fructose 6-phosphate. It participates in carbohydrate biosynthesis; gluconeogenesis. The protein operates within carbohydrate degradation; glycolysis; D-glyceraldehyde 3-phosphate and glycerone phosphate from D-glucose: step 2/4. Catalyzes the reversible isomerization of glucose-6-phosphate to fructose-6-phosphate. The sequence is that of Glucose-6-phosphate isomerase from Vibrio atlanticus (strain LGP32) (Vibrio splendidus (strain Mel32)).